The chain runs to 345 residues: Protein RecA (345 aa).

Position 63–70 (63–70 (GPESSGKT)) interacts with ATP. A disordered region spans residues 326-345 (VLSDALMTDPEPDADGTPED). The span at 335 to 345 (PEPDADGTPED) shows a compositional bias: acidic residues.

The protein belongs to the RecA family.

Its subcellular location is the cytoplasm. Its function is as follows. Can catalyze the hydrolysis of ATP in the presence of single-stranded DNA, the ATP-dependent uptake of single-stranded DNA by duplex DNA, and the ATP-dependent hybridization of homologous single-stranded DNAs. It interacts with LexA causing its activation and leading to its autocatalytic cleavage. The protein is Protein RecA of Gluconobacter oxydans (strain 621H) (Gluconobacter suboxydans).